Reading from the N-terminus, the 387-residue chain is F-box protein At5g41490 (387 aa).

An F-box domain is found at 2 to 47 (ATMITNLRRDLIEEIISRVPLRSMKAVRLTCKSWNNISKSEIFTKM).

The protein is F-box protein At5g41490 of Arabidopsis thaliana (Mouse-ear cress).